The following is a 64-amino-acid chain: Large ribosomal subunit protein bL32 (64 aa).

The span at M1–P10 shows a compositional bias: basic residues. Residues M1–K22 form a disordered region. Positions S11 to K22 are enriched in basic and acidic residues.

The protein belongs to the bacterial ribosomal protein bL32 family.

The sequence is that of Large ribosomal subunit protein bL32 from Sorangium cellulosum (strain So ce56) (Polyangium cellulosum (strain So ce56)).